A 216-amino-acid polypeptide reads, in one-letter code: Transmembrane emp24 domain-containing protein eca (216 aa).

Positions 1 to 20 (MRDQFISLALILCVLHSACG) are cleaved as a signal peptide. Over 21 to 182 (LYFHISETER…FRHTSESTNS (162 aa)) the chain is Lumenal. The GOLD domain maps to 30–126 (RKCFIEEVPD…QLRVHLDIQV (97 aa)). The stretch at 134-164 (ANVAQKEKLTELQLRIRQLLDQVEQITKEQN) forms a coiled coil. The helical transmembrane segment at 183 to 203 (RVLWWSLAQTIVLVCMGFWQM) threads the bilayer. The Cytoplasmic portion of the chain corresponds to 204 to 216 (RHLKSFFEAKKLV). The Prevents secretion from ER signature appears at 213 to 216 (KKLV).

This sequence belongs to the EMP24/GP25L family.

It localises to the endoplasmic reticulum membrane. In terms of biological role, eca and bai are essential, though not redundant, for dorsoventral patterning of the embryo. Specifically required during early embryogenesis for the activity of maternal tkv, while the zygotic tkv is not affected. Involved in Golgi organization. This chain is Transmembrane emp24 domain-containing protein eca, found in Drosophila sechellia (Fruit fly).